Here is a 470-residue protein sequence, read N- to C-terminus: Glutamate--tRNA ligase 2 (470 aa).

The short motif at 11–21 (PSPTGHLHLGG) is the 'HIGH' region element. A 'KMSKS' region motif is present at residues 238 to 242 (KLSKR). Lys241 is an ATP binding site.

The protein belongs to the class-I aminoacyl-tRNA synthetase family. Glutamate--tRNA ligase type 1 subfamily. In terms of assembly, monomer.

Its subcellular location is the cytoplasm. It catalyses the reaction tRNA(Glu) + L-glutamate + ATP = L-glutamyl-tRNA(Glu) + AMP + diphosphate. In terms of biological role, catalyzes the attachment of glutamate to tRNA(Glu) in a two-step reaction: glutamate is first activated by ATP to form Glu-AMP and then transferred to the acceptor end of tRNA(Glu). In Ehrlichia ruminantium (strain Welgevonden), this protein is Glutamate--tRNA ligase 2.